Consider the following 190-residue polypeptide: Holliday junction branch migration complex subunit RuvA (190 aa).

The domain I stretch occupies residues 1–64 (MIGKLTGTLL…EDAQLLYGFG (64 aa)). Positions 65 to 137 (TAQERQAFRE…LKGKLGADVG (73 aa)) are domain II. Residues 137–141 (GVRAH) form a flexible linker region. The domain III stretch occupies residues 142–190 (AANDNQADILQALLALGYNDKEAAAALKALPADVGVSEGIKLALKSLSK).

Belongs to the RuvA family. Homotetramer. Forms an RuvA(8)-RuvB(12)-Holliday junction (HJ) complex. HJ DNA is sandwiched between 2 RuvA tetramers; dsDNA enters through RuvA and exits via RuvB. An RuvB hexamer assembles on each DNA strand where it exits the tetramer. Each RuvB hexamer is contacted by two RuvA subunits (via domain III) on 2 adjacent RuvB subunits; this complex drives branch migration. In the full resolvosome a probable DNA-RuvA(4)-RuvB(12)-RuvC(2) complex forms which resolves the HJ.

It localises to the cytoplasm. The RuvA-RuvB-RuvC complex processes Holliday junction (HJ) DNA during genetic recombination and DNA repair, while the RuvA-RuvB complex plays an important role in the rescue of blocked DNA replication forks via replication fork reversal (RFR). RuvA specifically binds to HJ cruciform DNA, conferring on it an open structure. The RuvB hexamer acts as an ATP-dependent pump, pulling dsDNA into and through the RuvAB complex. HJ branch migration allows RuvC to scan DNA until it finds its consensus sequence, where it cleaves and resolves the cruciform DNA. This Acidovorax ebreus (strain TPSY) (Diaphorobacter sp. (strain TPSY)) protein is Holliday junction branch migration complex subunit RuvA.